A 725-amino-acid polypeptide reads, in one-letter code: FYVE, RhoGEF and PH domain-containing protein 3 (725 aa).

A disordered region spans residues 1 to 151 (MESGRGSSTP…KADKDAGLAQ (151 aa)). The segment covering 124-136 (EEADSDVGEEPDS) has biased composition (acidic residues). At Ser-128 the chain carries Phosphoserine. Residues 157 to 341 (KLLHIAQELL…STAANHSNAA (185 aa)) enclose the DH domain. Residues 370 to 469 (ELIKEGQIQK…WIQIIQATIE (100 aa)) form the PH 1 domain. The disordered stretch occupies residues 487–532 (QDEDPSLSPDMPITSTSPVEPVVTTEGSSGAAGLEPRKLSSKTRRD). Low complexity predominate over residues 500–512 (TSTSPVEPVVTTE). The span at 521–532 (EPRKLSSKTRRD) shows a compositional bias: basic and acidic residues. The FYVE-type zinc-finger motif lies at 532 to 588 (DKEKQSCKSCGETFNSITKRRHHCKLCGAVICGKCSEFKAENSRQSRVCRDCFLTQP). 8 residues coordinate Zn(2+): Cys-538, Cys-541, Cys-555, Cys-558, Cys-563, Cys-566, Cys-580, and Cys-583. The PH 2 domain maps to 604 to 703 (PSLLCGPLRL…WLETLSTAAH (100 aa)). Positions 703 to 725 (HGDTAQDSPGALQLQVPMGAAAP) are disordered.

It is found in the cytoplasm. It localises to the cytoskeleton. Its function is as follows. Promotes the formation of filopodia. May activate CDC42, a member of the Ras-like family of Rho- and Rac proteins, by exchanging bound GDP for free GTP. Plays a role in regulating the actin cytoskeleton and cell shape. The chain is FYVE, RhoGEF and PH domain-containing protein 3 (FGD3) from Homo sapiens (Human).